A 214-amino-acid chain; its full sequence is MSYDLIEWKIESLQIDYQEAICFMQQRIEDIYNGVQKELVWLLEHPPLYTAGTGAKVEDLLVDNLFPVYATNRGGKYTYHGPGQRIAYVMLNLKTRNKCNIRLYVETLGNWIVETLSHFSVKSYFNPDLIGVWVTHGGTEKKIAAFGIRIRKWVTYHGVSINIDTNLSHYSGIVPCGIKDYGITSLRKLGINISYEEFDIVLQEKFNEIFSNFN.

Residues 34 to 214 (GVQKELVWLL…KFNEIFSNFN (181 aa)) form the BPL/LPL catalytic domain. Substrate is bound by residues 73–80 (RGGKYTYH), 145–147 (AFG), and 158–160 (GVS). The Acyl-thioester intermediate role is filled by cysteine 176.

This sequence belongs to the LipB family.

Its subcellular location is the cytoplasm. It carries out the reaction octanoyl-[ACP] + L-lysyl-[protein] = N(6)-octanoyl-L-lysyl-[protein] + holo-[ACP] + H(+). It functions in the pathway protein modification; protein lipoylation via endogenous pathway; protein N(6)-(lipoyl)lysine from octanoyl-[acyl-carrier-protein]: step 1/2. Catalyzes the transfer of endogenously produced octanoic acid from octanoyl-acyl-carrier-protein onto the lipoyl domains of lipoate-dependent enzymes. Lipoyl-ACP can also act as a substrate although octanoyl-ACP is likely to be the physiological substrate. This is Octanoyltransferase from Ehrlichia chaffeensis (strain ATCC CRL-10679 / Arkansas).